A 451-amino-acid chain; its full sequence is Glutamyl-tRNA reductase (451 aa).

Residues 49–52 (TCNR), Ser-109, 114–116 (EQQ), and Gln-120 each bind substrate. Cys-50 serves as the catalytic Nucleophile. An NADP(+)-binding site is contributed by 190 to 195 (GAGAMG).

Belongs to the glutamyl-tRNA reductase family. In terms of assembly, homodimer.

It carries out the reaction (S)-4-amino-5-oxopentanoate + tRNA(Glu) + NADP(+) = L-glutamyl-tRNA(Glu) + NADPH + H(+). The protein operates within porphyrin-containing compound metabolism; protoporphyrin-IX biosynthesis; 5-aminolevulinate from L-glutamyl-tRNA(Glu): step 1/2. Functionally, catalyzes the NADPH-dependent reduction of glutamyl-tRNA(Glu) to glutamate 1-semialdehyde (GSA). This Mycolicibacterium smegmatis (strain ATCC 700084 / mc(2)155) (Mycobacterium smegmatis) protein is Glutamyl-tRNA reductase.